A 189-amino-acid chain; its full sequence is MSIKSDKWIRRMAEEHKMIEPFVPDQVRASEDGRRIVSYGTSSYGYDIRCADEFKIFTNINSTIVDPKNFDEGSFVDFKGDVCIIPPNSFALARTVEYFRIPRTVLTVCLGKSTYARCGIIVNVTPFEPEWEGYVTLEFSNTTPLPAKIYANEGVAQVLFFESDEVCDVSYADRGGKYQGQRGVTLPKT.

DCTP is bound by residues K112–R117, T136–E138, Q157, Y171, and Q181. E138 (proton donor/acceptor) is an active-site residue.

Belongs to the dCTP deaminase family. Homotrimer.

It carries out the reaction dCTP + H2O + H(+) = dUTP + NH4(+). It functions in the pathway pyrimidine metabolism; dUMP biosynthesis; dUMP from dCTP (dUTP route): step 1/2. Catalyzes the deamination of dCTP to dUTP. The polypeptide is dCTP deaminase (Burkholderia orbicola (strain MC0-3)).